The sequence spans 201 residues: Adenylyl-sulfate kinase (201 aa).

Position 35-42 (35-42 (GLSGSGKS)) interacts with ATP. The active-site Phosphoserine intermediate is the serine 109.

It belongs to the APS kinase family.

The catalysed reaction is adenosine 5'-phosphosulfate + ATP = 3'-phosphoadenylyl sulfate + ADP + H(+). It participates in sulfur metabolism; hydrogen sulfide biosynthesis; sulfite from sulfate: step 2/3. Functionally, catalyzes the synthesis of activated sulfate. The sequence is that of Adenylyl-sulfate kinase from Enterobacter sp. (strain 638).